Consider the following 271-residue polypeptide: Ferric vulnibactin reductase VuuB (271 aa).

One can recognise an FAD-binding FR-type domain in the interval 8–131; the sequence is VYPMLLDFVR…IGPAGPDPLI (124 aa).

Belongs to the SIP oxidoreductase family. In terms of assembly, monomer. FAD serves as cofactor.

The protein resides in the cytoplasm. It catalyses the reaction 2 a Fe(II)-siderophore + NAD(+) + H(+) = 2 a Fe(III)-siderophore + NADH. Functionally, ferric-siderophore reductase involved in iron removal from the siderophores after their transport into the cell. Acts as a major ferric-vulnibactin reductase catalyzing the reduction of Fe(3+)-vulnibactin, a catecholate siderophore synthesized by V.vulnificus. Catalyzes reduction of Fe(3+)-aerobactin, a citrate-hydroxamate siderophore produced by other bacteria, in the absence of IutB. Catalyzes reduction of Fe(3+)-vibriobactin in vitro. No activity with ferrioxamine B or Fe(3+)-enterobactin. Catalyzes reduction of ferric chelating compounds Fe(3+)-nitrilotriacetic acid (NTA), Fe(3+)-citrate and Fe(3+)-EDTA as well as non-complexed FeCl3 in the presence of NADH as its electron donor and FAD as its cofactor in vitro. Highest activity with Fe(3+)-NTA as electron acceptor. The sequence is that of Ferric vulnibactin reductase VuuB from Vibrio vulnificus.